A 231-amino-acid polypeptide reads, in one-letter code: Ribosyldihydronicotinamide dehydrogenase [quinone] (231 aa).

FAD-binding positions include H12, 18–21 (FNGS), and 104–107 (LYWF). 127 to 129 (FDV) provides a ligand contact to substrate. FAD is bound by residues 148–151 (TTGG) and Y156. Zn(2+)-binding residues include H174 and H178. E194 contributes to the FAD binding site. S197 is modified (phosphoserine). FAD is bound at residue R201. C223 contacts Zn(2+).

This sequence belongs to the NAD(P)H dehydrogenase (quinone) family. Homodimer. It depends on Zn(2+) as a cofactor. FAD serves as cofactor.

It is found in the cytoplasm. It catalyses the reaction 1-(beta-D-ribofuranosyl)-1,4-dihydronicotinamide + a quinone + H(+) = beta-nicotinamide D-riboside + a quinol. Functionally, the enzyme apparently serves as a quinone reductase in connection with conjugation reactions of hydroquinones involved in detoxification pathways as well as in biosynthetic processes such as the vitamin K-dependent gamma-carboxylation of glutamate residues in prothrombin synthesis. This Rattus norvegicus (Rat) protein is Ribosyldihydronicotinamide dehydrogenase [quinone] (Nqo2).